A 1400-amino-acid chain; its full sequence is DNA-directed RNA polymerase subunit beta' (1400 aa).

Positions 70, 72, 85, and 88 each coordinate Zn(2+). Mg(2+)-binding residues include Asp-460, Asp-462, and Asp-464. Zn(2+)-binding residues include Cys-814, Cys-889, Cys-896, and Cys-899.

The protein belongs to the RNA polymerase beta' chain family. The RNAP catalytic core consists of 2 alpha, 1 beta, 1 beta' and 1 omega subunit. When a sigma factor is associated with the core the holoenzyme is formed, which can initiate transcription. Requires Mg(2+) as cofactor. Zn(2+) is required as a cofactor.

It catalyses the reaction RNA(n) + a ribonucleoside 5'-triphosphate = RNA(n+1) + diphosphate. In terms of biological role, DNA-dependent RNA polymerase catalyzes the transcription of DNA into RNA using the four ribonucleoside triphosphates as substrates. In Alcanivorax borkumensis (strain ATCC 700651 / DSM 11573 / NCIMB 13689 / SK2), this protein is DNA-directed RNA polymerase subunit beta'.